The following is a 118-amino-acid chain: Co-chaperonin GroES (118 aa).

The protein belongs to the GroES chaperonin family. Heptamer of 7 subunits arranged in a ring. Interacts with the chaperonin GroEL.

It localises to the cytoplasm. In terms of biological role, together with the chaperonin GroEL, plays an essential role in assisting protein folding. The GroEL-GroES system forms a nano-cage that allows encapsulation of the non-native substrate proteins and provides a physical environment optimized to promote and accelerate protein folding. GroES binds to the apical surface of the GroEL ring, thereby capping the opening of the GroEL channel. The chain is Co-chaperonin GroES from Helicobacter pylori (strain G27).